A 430-amino-acid polypeptide reads, in one-letter code: Serine--tRNA ligase (430 aa).

An L-serine-binding site is contributed by 237–239 (TAE). ATP is bound at residue 268–270 (RSE). Glu291 contacts L-serine. 355–358 (EISS) contacts ATP. Position 391 (Ser391) interacts with L-serine.

This sequence belongs to the class-II aminoacyl-tRNA synthetase family. Type-1 seryl-tRNA synthetase subfamily. In terms of assembly, homodimer. The tRNA molecule binds across the dimer.

The protein resides in the cytoplasm. It carries out the reaction tRNA(Ser) + L-serine + ATP = L-seryl-tRNA(Ser) + AMP + diphosphate + H(+). It catalyses the reaction tRNA(Sec) + L-serine + ATP = L-seryl-tRNA(Sec) + AMP + diphosphate + H(+). Its pathway is aminoacyl-tRNA biosynthesis; selenocysteinyl-tRNA(Sec) biosynthesis; L-seryl-tRNA(Sec) from L-serine and tRNA(Sec): step 1/1. Functionally, catalyzes the attachment of serine to tRNA(Ser). Is also able to aminoacylate tRNA(Sec) with serine, to form the misacylated tRNA L-seryl-tRNA(Sec), which will be further converted into selenocysteinyl-tRNA(Sec). In Yersinia enterocolitica serotype O:8 / biotype 1B (strain NCTC 13174 / 8081), this protein is Serine--tRNA ligase.